The primary structure comprises 202 residues: Josephin-1 (202 aa).

Residues 1–22 (MSCVPWKGDKAKAESSDLPQAA) are disordered. The residue at position 15 (S15) is a Phosphoserine. In terms of domain architecture, Josephin spans 23 to 202 (PPQIYHEKQR…EAHQSWRADV (180 aa)). C36 acts as the Nucleophile in catalysis. The active-site Proton acceptor is H139.

In terms of assembly, interacts with beta-actin/ACTB. Post-translationally, monoubiquitinated. Ubiquitination activates deubiquitination activity in vitro. In terms of tissue distribution, widely expressed (at protein level).

It is found in the cell membrane. Its subcellular location is the cytoplasm. It carries out the reaction Thiol-dependent hydrolysis of ester, thioester, amide, peptide and isopeptide bonds formed by the C-terminal Gly of ubiquitin (a 76-residue protein attached to proteins as an intracellular targeting signal).. Its function is as follows. Deubiquitinates monoubiquitinated probes (in vitro). When ubiquitinated, cleaves 'Lys-63'-linked and 'Lys-48'-linked poly-ubiquitin chains (in vitro), hence may act as a deubiquitinating enzyme. May increase macropinocytosis and suppress clathrin- and caveolae-mediated endocytosis. May enhance membrane dynamics and cell motility independently of its catalytic activity. The chain is Josephin-1 (Josd1) from Mus musculus (Mouse).